Here is a 736-residue protein sequence, read N- to C-terminus: Orphan sodium- and chloride-dependent neurotransmitter transporter NTT5 (736 aa).

Over 1 to 138 (MKTEAQPSTS…FAYLWLNSGG (138 aa)) the chain is Cytoplasmic. 3 consecutive transmembrane segments (helical) span residues 139-159 (CSFA…LLFL), 177-197 (IIAP…FILG), and 199-219 (YFNV…QFPV). Residues 220-263 (PWEKCPLTMNSSGFDPECERTTPSIYFWYQQALKASDRIEDGGS) are Extracellular-facing. N-linked (GlcNAc...) asparagine glycosylation is present at Asn229. 4 helical membrane-spanning segments follow: residues 264–284 (PVYS…AFMI), 290–310 (TGKV…GFFI), 338–358 (VWSL…GSVA), and 383–403 (LTLL…ATVI). Residues 404–495 (THRCCERNAE…EAMSFLPPSV (92 aa)) lie on the Extracellular side of the membrane. 5 consecutive transmembrane segments (helical) span residues 496 to 516 (FWSF…AIGI), 534 to 554 (HTKL…LFFT), 568 to 588 (YWIV…VSWA), 609 to 629 (IFGW…FVTM), and 659 to 679 (ALLL…AYFV). Over 680 to 736 (YCRIHRIPFRPKSGDGPMTASTSLPLSHQLTPSKEVQKEEILQVDETKYPSTCNVTS) the chain is Cytoplasmic.

The protein belongs to the sodium:neurotransmitter symporter (SNF) (TC 2.A.22) family. SLC6A16 subfamily. Highly expressed in peripheral tissues, particularly in testis, pancreas, and prostate.

It localises to the membrane. This chain is Orphan sodium- and chloride-dependent neurotransmitter transporter NTT5 (SLC6A16), found in Homo sapiens (Human).